A 571-amino-acid polypeptide reads, in one-letter code: RNA polymerase sigma factor SigA (571 aa).

A sigma-70 factor domain-2 region spans residues Met321–Thr391. The Interaction with polymerase core subunit RpoC signature appears at Asp345–Gln348. The tract at residues Glu400–Ala476 is sigma-70 factor domain-3. Residues Val489–His542 are sigma-70 factor domain-4. Positions Leu515 to Ala534 form a DNA-binding region, H-T-H motif.

Belongs to the sigma-70 factor family. RpoD/SigA subfamily. As to quaternary structure, interacts transiently with the RNA polymerase catalytic core.

The protein resides in the cytoplasm. Its function is as follows. Sigma factors are initiation factors that promote the attachment of RNA polymerase to specific initiation sites and are then released. This sigma factor is the primary sigma factor during exponential growth. The sequence is that of RNA polymerase sigma factor SigA from Chlamydia trachomatis serovar D (strain ATCC VR-885 / DSM 19411 / UW-3/Cx).